The following is a 1357-amino-acid chain: DNA-directed RNA polymerase subunit beta (1357 aa).

It belongs to the RNA polymerase beta chain family. As to quaternary structure, the RNAP catalytic core consists of 2 alpha, 1 beta, 1 beta' and 1 omega subunit. When a sigma factor is associated with the core the holoenzyme is formed, which can initiate transcription.

The enzyme catalyses RNA(n) + a ribonucleoside 5'-triphosphate = RNA(n+1) + diphosphate. Functionally, DNA-dependent RNA polymerase catalyzes the transcription of DNA into RNA using the four ribonucleoside triphosphates as substrates. The sequence is that of DNA-directed RNA polymerase subunit beta from Pseudomonas putida (Arthrobacter siderocapsulatus).